Consider the following 216-residue polypeptide: MRIILLGPPGAGKGTQAKLISEEFSIPHISTGDIFRANIKEKTPLGIEAKRYIDNGQLVPDEVTIGIVKDRLTKDDCDNGFLLDGFPRTVAQAEALDEFLKGINKELDVALLIKVPEEFILERMTGRRVCTSCGASYHIRFNPPKIEGKCDICDNELIQRKDDTEATVKERLEVYSKQTYPLINYYKDNGIISEVNGTESINEVFGNISNILGRDK.

Residue 10-15 (GAGKGT) participates in ATP binding. Positions 30–59 (STGDIFRANIKEKTPLGIEAKRYIDNGQLV) are NMP. AMP is bound by residues Thr-31, Arg-36, 57 to 59 (QLV), 85 to 88 (GFPR), and Gln-92. The tract at residues 126-163 (GRRVCTSCGASYHIRFNPPKIEGKCDICDNELIQRKDD) is LID. Arg-127 contacts ATP. Zn(2+) contacts are provided by Cys-130 and Cys-133. 136-137 (SY) is an ATP binding site. Residues Cys-150 and Cys-153 each coordinate Zn(2+). Residues Arg-160 and Arg-171 each contribute to the AMP site. Residue Glu-199 participates in ATP binding.

This sequence belongs to the adenylate kinase family. In terms of assembly, monomer.

It localises to the cytoplasm. The enzyme catalyses AMP + ATP = 2 ADP. Its pathway is purine metabolism; AMP biosynthesis via salvage pathway; AMP from ADP: step 1/1. Catalyzes the reversible transfer of the terminal phosphate group between ATP and AMP. Plays an important role in cellular energy homeostasis and in adenine nucleotide metabolism. This is Adenylate kinase from Clostridium botulinum (strain ATCC 19397 / Type A).